The sequence spans 359 residues: Nicotinate-nucleotide--dimethylbenzimidazole phosphoribosyltransferase (359 aa).

Residue Glu318 is the Proton acceptor of the active site.

This sequence belongs to the CobT family. As to quaternary structure, homodimer.

It carries out the reaction 5,6-dimethylbenzimidazole + nicotinate beta-D-ribonucleotide = alpha-ribazole 5'-phosphate + nicotinate + H(+). It participates in nucleoside biosynthesis; alpha-ribazole biosynthesis; alpha-ribazole from 5,6-dimethylbenzimidazole: step 1/2. In terms of biological role, catalyzes the synthesis of alpha-ribazole-5'-phosphate from nicotinate mononucleotide (NAMN) and 5,6-dimethylbenzimidazole (DMB). This Escherichia coli O81 (strain ED1a) protein is Nicotinate-nucleotide--dimethylbenzimidazole phosphoribosyltransferase.